We begin with the raw amino-acid sequence, 272 residues long: AA9 family lytic polysaccharide monooxygenase G (272 aa).

Residues 1–22 form the signal peptide; sequence MKGAGSASFLLTLLSTITRTSA. Cu(2+) is bound at residue His-23. Residue Asn-60 is glycosylated (N-linked (GlcNAc...) asparagine). 2 disulfides stabilise this stretch: Cys-78–Cys-202 and Cys-121–Cys-125. His-110 is a Cu(2+) binding site. O2 is bound by residues His-188 and Gln-197. Tyr-199 provides a ligand contact to Cu(2+).

It belongs to the polysaccharide monooxygenase AA9 family. Cu(2+) serves as cofactor.

It localises to the secreted. The catalysed reaction is [(1-&gt;4)-beta-D-glucosyl]n+m + reduced acceptor + O2 = 4-dehydro-beta-D-glucosyl-[(1-&gt;4)-beta-D-glucosyl]n-1 + [(1-&gt;4)-beta-D-glucosyl]m + acceptor + H2O.. Lytic polysaccharide monooxygenase (LPMO) that depolymerizes crystalline and amorphous polysaccharides via the oxidation of scissile alpha- or beta-(1-4)-glycosidic bonds, yielding C1 or C4 oxidation products. Catalysis by LPMOs requires the reduction of the active-site copper from Cu(II) to Cu(I) by a reducing agent and H(2)O(2) or O(2) as a cosubstrate. Acts preferentially on crystalline regions of cellulose such as highly crystalline algae cellulose. In Emericella nidulans (strain FGSC A4 / ATCC 38163 / CBS 112.46 / NRRL 194 / M139) (Aspergillus nidulans), this protein is AA9 family lytic polysaccharide monooxygenase G.